Consider the following 321-residue polypeptide: tRNA-dihydrouridine synthase B (321 aa).

FMN contacts are provided by residues 16–18 (PMA) and Gln70. Cys100 serves as the catalytic Proton donor. FMN-binding positions include Lys139, 200–202 (NGD), and 224–225 (GR).

This sequence belongs to the Dus family. DusB subfamily. The cofactor is FMN.

It catalyses the reaction a 5,6-dihydrouridine in tRNA + NAD(+) = a uridine in tRNA + NADH + H(+). The enzyme catalyses a 5,6-dihydrouridine in tRNA + NADP(+) = a uridine in tRNA + NADPH + H(+). Catalyzes the synthesis of 5,6-dihydrouridine (D), a modified base found in the D-loop of most tRNAs, via the reduction of the C5-C6 double bond in target uridines. The protein is tRNA-dihydrouridine synthase B of Salmonella typhi.